Consider the following 234-residue polypeptide: Glucosamine-6-phosphate deaminase (234 aa).

Catalysis depends on aspartate 63, which acts as the Proton acceptor; for enolization step. Asparagine 129 acts as the For ring-opening step in catalysis. The active-site Proton acceptor; for ring-opening step is histidine 131. Glutamate 136 serves as the catalytic For ring-opening step.

This sequence belongs to the glucosamine/galactosamine-6-phosphate isomerase family. NagB subfamily.

It catalyses the reaction alpha-D-glucosamine 6-phosphate + H2O = beta-D-fructose 6-phosphate + NH4(+). It participates in amino-sugar metabolism; N-acetylneuraminate degradation; D-fructose 6-phosphate from N-acetylneuraminate: step 5/5. Its function is as follows. Catalyzes the reversible isomerization-deamination of glucosamine 6-phosphate (GlcN6P) to form fructose 6-phosphate (Fru6P) and ammonium ion. The sequence is that of Glucosamine-6-phosphate deaminase from Listeria monocytogenes serovar 1/2a (strain ATCC BAA-679 / EGD-e).